Here is a 232-residue protein sequence, read N- to C-terminus: Cytidylate kinase (232 aa).

15–23 contacts ATP; the sequence is GPAGAGKST. The tract at residues 164–192 is disordered; sequence KEDPPPISQGQLAAEMKERDMRDSTRADA. The segment covering 178 to 189 has biased composition (basic and acidic residues); the sequence is EMKERDMRDSTR.

It belongs to the cytidylate kinase family. Type 1 subfamily.

It localises to the cytoplasm. It catalyses the reaction CMP + ATP = CDP + ADP. The enzyme catalyses dCMP + ATP = dCDP + ADP. The protein is Cytidylate kinase of Solibacter usitatus (strain Ellin6076).